We begin with the raw amino-acid sequence, 91 residues long: Sec-independent protein translocase protein TatA (91 aa).

The helical transmembrane segment at 1-21 threads the bilayer; that stretch reads MGIFDWKHWIVILIVVVLVFG. Residues 41 to 91 form a disordered region; it reads KAMNDDDKPAEQPAPQPQQAQPAPQGSPLNQPHTIDAQAHKVDEPIRKDQV. The span at 51-64 shows a compositional bias: low complexity; the sequence is EQPAPQPQQAQPAP. Over residues 78–91 the composition is skewed to basic and acidic residues; that stretch reads QAHKVDEPIRKDQV.

It belongs to the TatA/E family. In terms of assembly, the Tat system comprises two distinct complexes: a TatABC complex, containing multiple copies of TatA, TatB and TatC subunits, and a separate TatA complex, containing only TatA subunits. Substrates initially bind to the TatABC complex, which probably triggers association of the separate TatA complex to form the active translocon.

It localises to the cell inner membrane. In terms of biological role, part of the twin-arginine translocation (Tat) system that transports large folded proteins containing a characteristic twin-arginine motif in their signal peptide across membranes. TatA could form the protein-conducting channel of the Tat system. The protein is Sec-independent protein translocase protein TatA of Pseudomonas syringae pv. syringae (strain B728a).